The chain runs to 62 residues: Potassium channel toxin alpha-KTx Tx308 (62 aa).

The signal sequence occupies residues 1 to 18 (MQKLFIVLLLFCILRLDA). Cystine bridges form between C28-C46, C33-C59, and C37-C61.

This sequence belongs to the short scorpion toxin superfamily. Potassium channel inhibitor family. Alpha-KTx 23 subfamily. As to expression, expressed by the venom gland.

It localises to the secreted. May block potassium channels. The polypeptide is Potassium channel toxin alpha-KTx Tx308 (Buthus israelis (Israeli scorpion)).